Here is an 89-residue protein sequence, read N- to C-terminus: Toxin To14 (89 aa).

Residues 1-19 (MNCLMLIFVVFLLAFGVEC) form the signal peptide. The 65-residue stretch at 21 to 85 (KDDYPVDTAK…SPTKTSGRCN (65 aa)) folds into the LCN-type CS-alpha/beta domain. Cystine bridges form between Cys-33-Cys-84, Cys-37-Cys-60, Cys-46-Cys-67, and Cys-50-Cys-69.

Expressed by the venom gland.

The protein resides in the secreted. Its function is as follows. Inhibits voltage-gated sodium channels (Nav). The sequence is that of Toxin To14 from Tityus obscurus (Amazonian scorpion).